Here is a 344-residue protein sequence, read N- to C-terminus: Transcription factor HRS1 (344 aa).

The tract at residues 88–184 (IKDSSTSNEE…DGGGGRKQRR (97 aa)) is disordered. The span at 95–104 (NEEEDEEFDD) shows a compositional bias: acidic residues. Basic and acidic residues-rich tracts occupy residues 105–124 (EHGNHDPDNDSEDKNTKSDW) and 138–178 (LLPK…DGGG). In terms of domain architecture, HTH myb-type spans 178 to 238 (GGRKQRRCWS…HLQKYRLHTR (61 aa)). Positions 209 to 234 (PKQIREFMKVDGLTNDEVKSHLQKYR) form a DNA-binding region, H-T-H motif. Residues 269-291 (STGKTTGGATTSSTTTTTGIYGT) show a composition bias toward low complexity. Residues 269–322 (STGKTTGGATTSSTTTTTGIYGTMAAPPPPQWPSHSNYRPSIIVDEGSGSHSEG) form a disordered region.

Expressed in the root hair region and root hair cells.

The protein localises to the nucleus. In terms of biological role, transcription factor involved in nitrate and phosphate signaling in roots. Integrates nitrate and phosphate starvation responses and adaptation of root architecture depending on nutrient availabilities. Acts downstream of the nitrate sensor and transporter NPF6.3/NRT1.1. Represses primary root development in response to phosphate deficiency conditions, only when nitrate is present. Involved in the modulation of primary root and root hair growth in phosphate-deprived environment. May be required for suppressing abscisic acid (ABA) signaling in germinating embryo axis, which promotes the timely germination of seeds. The polypeptide is Transcription factor HRS1 (Arabidopsis thaliana (Mouse-ear cress)).